Reading from the N-terminus, the 235-residue chain is (5-formylfuran-3-yl)methyl phosphate synthase (235 aa).

K27 acts as the Schiff-base intermediate with substrate in catalysis. Residue K85 is the Proton acceptor of the active site.

Belongs to the MfnB family.

It catalyses the reaction 2 D-glyceraldehyde 3-phosphate = 4-(hydroxymethyl)-2-furancarboxaldehyde phosphate + phosphate + 2 H2O. Its pathway is cofactor biosynthesis; methanofuran biosynthesis. In terms of biological role, catalyzes the formation of 4-(hydroxymethyl)-2-furancarboxaldehyde phosphate (4-HFC-P) from two molecules of glyceraldehyde-3-P (GA-3-P). This is (5-formylfuran-3-yl)methyl phosphate synthase from Methanococcus aeolicus (strain ATCC BAA-1280 / DSM 17508 / OCM 812 / Nankai-3).